We begin with the raw amino-acid sequence, 311 residues long: Protoheme IX farnesyltransferase (311 aa).

The next 8 membrane-spanning stretches (helical) occupy residues 30–50, 55–75, 108–128, 129–149, 153–173, 182–202, 233–253, and 287–307; these read VVQL…PGWP, WGVA…AAAF, FAVL…NALT, MWLT…LLKP, QNIV…WAAM, WILC…LALY, FVLF…WFYL, and IWHL…GPLL.

Belongs to the UbiA prenyltransferase family. Protoheme IX farnesyltransferase subfamily.

The protein resides in the cell inner membrane. It carries out the reaction heme b + (2E,6E)-farnesyl diphosphate + H2O = Fe(II)-heme o + diphosphate. It functions in the pathway porphyrin-containing compound metabolism; heme O biosynthesis; heme O from protoheme: step 1/1. Its function is as follows. Converts heme B (protoheme IX) to heme O by substitution of the vinyl group on carbon 2 of heme B porphyrin ring with a hydroxyethyl farnesyl side group. This is Protoheme IX farnesyltransferase from Methylibium petroleiphilum (strain ATCC BAA-1232 / LMG 22953 / PM1).